The primary structure comprises 127 residues: Small ribosomal subunit protein uS13 (127 aa).

Residues 90–127 are disordered; it reads RRHRQGLPVRGQRTRTNARTRRGRRLTVAGKKKTPAKK. Residues 101–127 are compositionally biased toward basic residues; sequence QRTRTNARTRRGRRLTVAGKKKTPAKK.

It belongs to the universal ribosomal protein uS13 family. Part of the 30S ribosomal subunit. Forms a loose heterodimer with protein S19. Forms two bridges to the 50S subunit in the 70S ribosome.

Its function is as follows. Located at the top of the head of the 30S subunit, it contacts several helices of the 16S rRNA. In the 70S ribosome it contacts the 23S rRNA (bridge B1a) and protein L5 of the 50S subunit (bridge B1b), connecting the 2 subunits; these bridges are implicated in subunit movement. Contacts the tRNAs in the A and P-sites. In Synechocystis sp. (strain ATCC 27184 / PCC 6803 / Kazusa), this protein is Small ribosomal subunit protein uS13.